A 124-amino-acid chain; its full sequence is Small ribosomal subunit protein uS13 (124 aa).

The segment at 94 to 124 is disordered; that stretch reads GLPLRGQRTKNNSRTRKGRRKTVANKKKATK. Basic residues predominate over residues 100 to 124; sequence QRTKNNSRTRKGRRKTVANKKKATK.

The protein belongs to the universal ribosomal protein uS13 family. As to quaternary structure, part of the 30S ribosomal subunit. Forms a loose heterodimer with protein S19. Forms two bridges to the 50S subunit in the 70S ribosome.

Its function is as follows. Located at the top of the head of the 30S subunit, it contacts several helices of the 16S rRNA. In the 70S ribosome it contacts the 23S rRNA (bridge B1a) and protein L5 of the 50S subunit (bridge B1b), connecting the 2 subunits; these bridges are implicated in subunit movement. Contacts the tRNAs in the A and P-sites. This is Small ribosomal subunit protein uS13 from Christiangramia forsetii (strain DSM 17595 / CGMCC 1.15422 / KT0803) (Gramella forsetii).